Consider the following 1516-residue polypeptide: Receptor-type tyrosine-protein phosphatase S (1516 aa).

Positions 1–28 are cleaved as a signal peptide; sequence MRILPSPGMPALLSLVSLLSVLLMGCVA. Over 29-854 the chain is Extracellular; that stretch reads ESPPVFIKKP…PQPIIDGEEG (826 aa). Ig-like C2-type domains are found at residues 32-122, 134-223, and 235-317; these read PVFI…AKLT, PNID…ANLY, and PRFS…AQIT. 2 disulfide bridges follow: Cys53-Cys106 and Cys155-Cys206. The interval 67-71 is important for binding to glycosaminoglycan chains; that stretch reads KKGKK. 2 N-linked (GlcNAc...) asparagine glycosylation sites follow: Asn253 and Asn298. Cys256 and Cys301 form a disulfide bridge. Fibronectin type-III domains are found at residues 324–414, 419–513, 517–606, and 608–692; these read APGT…TGEQ, APRN…TQQG, QPMN…TLQS, and LPKN…TAAN. Residues 855–875 traverse the membrane as a helical segment; sequence LIWVIGPVLAVVFIICIVIAI. Topologically, residues 876–1516 are cytoplasmic; it reads LLYKNKRKDS…YLGSFDHYAT (641 aa). 2 Tyrosine-protein phosphatase domains span residues 961 to 1216 and 1248 to 1507; these read LSQE…LLEA and MELE…ALEY. Catalysis depends on phosphocysteine intermediate residues Cys1157 and Cys1448.

This sequence belongs to the protein-tyrosine phosphatase family. Receptor class 2A subfamily. Homodimer. Binding to large heparan sulfate proteoglycan structures promotes oligomerization. Binding to chondroitin sulfate proteoglycan does not lead to oligomerization. Interacts (via Ig-like domains) with NTRK1 and NTRK3, but does not form detectable complexes with NTRK2. Interacts (via extracellular domain) with the heparan sulfate proteoglycans AGRN and COL18A1. Post-translationally, a cleavage occurs, separating the extracellular domain from the transmembrane segment. This process called 'ectodomain shedding' is thought to be involved in receptor desensitization, signal transduction and/or membrane localization. As to expression, detected in embryonic brain, dorsal root ganglion and spinal cord. Detected in embryonic retina (at protein level). Detected in embryonic brain, spinal cord, dorsal root ganglion, trigeminal ganglion, ganglia associated with the precardinal vein and vagus nerve, the inner and outer nuclear layer of the retina, limb, breast muscle, heart, gut and lung.

It localises to the cell membrane. It is found in the cell projection. Its subcellular location is the axon. The protein localises to the perikaryon. The protein resides in the cytoplasmic vesicle. It localises to the secretory vesicle. It is found in the synaptic vesicle membrane. Its subcellular location is the synapse. The protein localises to the synaptosome. The protein resides in the postsynaptic density. It localises to the neuron projection. It is found in the growth cone. The catalysed reaction is O-phospho-L-tyrosyl-[protein] + H2O = L-tyrosyl-[protein] + phosphate. Its function is as follows. Cell surface receptor that binds to glycosaminoglycans, including chondroitin sulfate proteoglycans and heparan sulfate proteoglycans. Binding to chondroitin sulfate and heparan sulfate proteoglycans has opposite effects on PTPRS oligomerization and regulation of neurite outgrowth. Contributes to the inhibition of neurite and axonal outgrowth by chondroitin sulfate proteoglycans, also after nerve transection. Plays a role in stimulating neurite outgrowth in response to the heparan sulfate proteoglycan GPC2. Required for normal brain development, especially for normal development of the pituitary gland and the olfactory bulb. Functions as tyrosine phosphatase. Mediates dephosphorylation of NTRK1, NTRK2 and NTRK3. Plays a role in down-regulation of signaling cascades that lead to the activation of Akt and MAP kinases. Down-regulates TLR9-mediated activation of NF-kappa-B, as well as production of TNF, interferon alpha and interferon beta. This Gallus gallus (Chicken) protein is Receptor-type tyrosine-protein phosphatase S (PTPRS).